The chain runs to 214 residues: Large ribosomal subunit protein uL3 (214 aa).

Gln153 carries the post-translational modification N5-methylglutamine.

It belongs to the universal ribosomal protein uL3 family. Part of the 50S ribosomal subunit. Forms a cluster with proteins L14 and L19. In terms of processing, methylated by PrmB.

In terms of biological role, one of the primary rRNA binding proteins, it binds directly near the 3'-end of the 23S rRNA, where it nucleates assembly of the 50S subunit. This chain is Large ribosomal subunit protein uL3, found in Aromatoleum aromaticum (strain DSM 19018 / LMG 30748 / EbN1) (Azoarcus sp. (strain EbN1)).